We begin with the raw amino-acid sequence, 450 residues long: MLKNNEILETISMIKEQNLDVRTITLGLSLMDCACEDVKVLSEKIYDKITKTAENLVKTGENIEKRFGIPIINKRISVTPISIVAASCNCNSYLSIAKAMDKAAKEVGVDFIGGFSALVHKGFTESDLKLIKSLPESLANTDIVCSSVNIGSTRYGINMDAVKLMGETIKETSLITPDGFGCAKLVVFCNAVEDNPFMAGAFHGVGEAEKVINVGVSGPGVVKKALEEVRGKSFEEVAETIKKTSFKVTRMGQLVAKEASKLMDIPFGIVDLSLAPTPAVGDSVGRVLEEMGLSNCGTHGTTAALALLNDAVKKGGLMASSYVGGLSGAFIPVSEDECMIEQSKNGFLTIEKLEAMTCVCSVGLDMIAIPGKTSASTISGIIADEAAIGMINNKTTAVRIIPVPNKDIGDIVEFGGLLGSAPIMRVSPGNCDDFISRGGRIPAPVHSLKN.

Belongs to the UPF0210 family. In terms of assembly, homodimer.

In Clostridium perfringens (strain 13 / Type A), this protein is UPF0210 protein CPE1497.